Consider the following 204-residue polypeptide: Putative F-box protein L168 (204 aa).

Residues 1 to 46 (MNLCDLFDEIIIGIIDELSDRDKIKFMTTCSRFYYFIDKTKYFDIY) form the F-box domain. Residues 161–184 (NETNKITNNHTNKKINNNKKHQNN) form a disordered region. Positions 171-183 (TNKKINNNKKHQN) are enriched in basic residues.

This Acanthamoeba polyphaga (Amoeba) protein is Putative F-box protein L168.